The primary structure comprises 1397 residues: ABC transporter G family member 41 (1397 aa).

Residues 138-411 (SLSKFVCSKK…FEGCGFKCPE (274 aa)) enclose the ABC transporter 1 domain. 171–178 (GPPGCGKT) lines the ATP pocket. The 213-residue stretch at 489 to 701 (EMLKACSRRE…AEIGLTANEF (213 aa)) folds into the ABC transmembrane type-2 1 domain. The next 6 helical transmembrane spans lie at 507–527 (FIYLFKSGLLVFNALVTMTVF), 549–570 (ALFRLLADGLPELTLTISRLGV), 594–614 (IPLSVLDSFIWTVLTYYVIGY), 625–645 (FIILLTFHLSCISMFRAIASI), 651–671 (ACSITGAISVLLLALFGGFVI), and 735–755 (TAFGALVGFVLFFNALYTLAL). The ABC transporter 2 domain maps to 805 to 1050 (VTFQNVQYYI…VIKYFESIPG (246 aa)). 842 to 849 (GVSGAGKT) contributes to the ATP binding site. In terms of domain architecture, ABC transmembrane type-2 2 spans 1122–1336 (GQLKACLWKQ…VLEGLLSSQY (215 aa)). 7 consecutive transmembrane segments (helical) span residues 1141-1161 (HNLTRIVFILLNSLLCSLLFW), 1173-1193 (LFSIFGSMYTIVIFSGINNCA), 1229-1249 (VPYSLLQSLLCTIIVYPMIGY), 1260-1280 (LYSIFCSLLIFNYCGMLMVAL), 1286-1306 (MALTLRSTFFSMVNLFAGFVM), 1314-1334 (WWIWMYYLSPTSWVLEGLLSS), and 1369-1389 (VVAFVLIAFPIIVASLFAFFM).

Belongs to the ABC transporter superfamily. ABCG family. PDR (TC 3.A.1.205) subfamily. Confined to roots.

Its subcellular location is the membrane. May be a general defense protein. This is ABC transporter G family member 41 (ABCG41) from Arabidopsis thaliana (Mouse-ear cress).